A 123-amino-acid polypeptide reads, in one-letter code: Small ribosomal subunit protein uS12 (123 aa).

A 3-methylthioaspartic acid modification is found at Asp-89. Residues 100-123 form a disordered region; sequence GSLDTSGVKGRNQGRSKYGTKKPK. The span at 111-123 shows a compositional bias: basic residues; that stretch reads NQGRSKYGTKKPK.

This sequence belongs to the universal ribosomal protein uS12 family. As to quaternary structure, part of the 30S ribosomal subunit. Contacts proteins S8 and S17. May interact with IF1 in the 30S initiation complex.

Its function is as follows. With S4 and S5 plays an important role in translational accuracy. In terms of biological role, interacts with and stabilizes bases of the 16S rRNA that are involved in tRNA selection in the A site and with the mRNA backbone. Located at the interface of the 30S and 50S subunits, it traverses the body of the 30S subunit contacting proteins on the other side and probably holding the rRNA structure together. The combined cluster of proteins S8, S12 and S17 appears to hold together the shoulder and platform of the 30S subunit. The sequence is that of Small ribosomal subunit protein uS12 from Pseudomonas syringae pv. syringae (strain B728a).